Consider the following 367-residue polypeptide: Glutamate 5-kinase (367 aa).

Lys10 is an ATP binding site. Residues Ser50, Asp137, and Asn149 each contribute to the substrate site. ATP-binding positions include 169 to 170 (TD) and 211 to 217 (TGGMSTK). The PUA domain maps to 275–353 (AGEITVDEGA…QQIDAILGYE (79 aa)).

Belongs to the glutamate 5-kinase family.

The protein resides in the cytoplasm. The enzyme catalyses L-glutamate + ATP = L-glutamyl 5-phosphate + ADP. It participates in amino-acid biosynthesis; L-proline biosynthesis; L-glutamate 5-semialdehyde from L-glutamate: step 1/2. Catalyzes the transfer of a phosphate group to glutamate to form L-glutamate 5-phosphate. This is Glutamate 5-kinase from Salmonella arizonae (strain ATCC BAA-731 / CDC346-86 / RSK2980).